Here is a 674-residue protein sequence, read N- to C-terminus: L-type lectin-domain containing receptor kinase SIT1 (674 aa).

A signal peptide spans 1-27 (MRRPELIMRSLPLILFLSLGSFHLAAA). Residues 28–301 (AVDDQFTFDG…IARAPSNVLK (274 aa)) lie on the Extracellular side of the membrane. A legume-lectin like region spans residues 31–275 (DQFTFDGFAG…VLAWSFKMDG (245 aa)). Residues asparagine 42, asparagine 61, asparagine 143, asparagine 196, asparagine 219, asparagine 240, and asparagine 281 are each glycosylated (N-linked (GlcNAc...) asparagine). A helical transmembrane segment spans residues 302-322 (ILLPIASAALVSALAIAVLVI). The Cytoplasmic segment spans residues 323 to 674 (HRRRRRYAEL…GNISDIPRAR (352 aa)). A Protein kinase domain is found at 357-636 (FSDERLLGFG…LDGAMPLPEL (280 aa)). ATP is bound by residues 363-371 (LGFGGFGRV) and lysine 386. The active-site Proton acceptor is aspartate 482. Phosphothreonine is present on residues threonine 511, threonine 515, threonine 516, and threonine 521.

The protein in the C-terminal section; belongs to the protein kinase superfamily. Ser/Thr protein kinase family. It in the N-terminal section; belongs to the leguminous lectin family. As to quaternary structure, interacts with B'KAPPA. In terms of processing, autophosphorylated at Thr-511, Thr-515 or Thr-516, and Thr-521 in response to salt stress. Dephosphorylated by phosphatase 2A in response to salt stress. In terms of tissue distribution, expressed in root epidermal cells.

It localises to the cell membrane. The enzyme catalyses L-seryl-[protein] + ATP = O-phospho-L-seryl-[protein] + ADP + H(+). It carries out the reaction L-threonyl-[protein] + ATP = O-phospho-L-threonyl-[protein] + ADP + H(+). Activated by autophosphorylation in response to salt stress. Functionally, lectin-domain containing receptor kinase involved in salt stress response. Acts as a negative regulator of salt tolerance. Mediates salt sensitivity by phosphorylating and activating MPK3 and MPK6. Promotes ethylene production and mediates salt-induced ethylene signaling. Promotes the accumulation of reactive oxygen species (ROS) under salt stress conditions. Its kinase activity is triggered by salt stress and is required for its function in salt stress response. Phosphorylates B'KAPPA, a B regulatory subunit of phosphatase 2A (PP2A). The polypeptide is L-type lectin-domain containing receptor kinase SIT1 (Oryza sativa subsp. japonica (Rice)).